A 140-amino-acid polypeptide reads, in one-letter code: 3-hydroxyacyl-[acyl-carrier-protein] dehydratase FabZ (140 aa).

His47 is a catalytic residue.

The protein belongs to the thioester dehydratase family. FabZ subfamily.

The protein resides in the cytoplasm. It catalyses the reaction a (3R)-hydroxyacyl-[ACP] = a (2E)-enoyl-[ACP] + H2O. Functionally, involved in unsaturated fatty acids biosynthesis. Catalyzes the dehydration of short chain beta-hydroxyacyl-ACPs and long chain saturated and unsaturated beta-hydroxyacyl-ACPs. The sequence is that of 3-hydroxyacyl-[acyl-carrier-protein] dehydratase FabZ from Streptococcus gordonii (strain Challis / ATCC 35105 / BCRC 15272 / CH1 / DL1 / V288).